The sequence spans 189 residues: Interferon alpha-21 (189 aa).

An N-terminal signal peptide occupies residues 1–23 (MALSFSLLMAVLVLSYKSICSLG). 2 disulfides stabilise this stretch: Cys24–Cys122 and Cys52–Cys162.

It belongs to the alpha/beta interferon family.

It is found in the secreted. Produced by macrophages, IFN-alpha have antiviral activities. Interferon stimulates the production of two enzymes: a protein kinase and an oligoadenylate synthetase. The protein is Interferon alpha-21 (IFNA21) of Homo sapiens (Human).